The primary structure comprises 283 residues: Pantothenate synthetase (283 aa).

30 to 37 (MGNLHDGH) serves as a coordination point for ATP. His37 (proton donor) is an active-site residue. (R)-pantoate is bound at residue Gln61. Gln61 provides a ligand contact to beta-alanine. 149–152 (GEKD) serves as a coordination point for ATP. Gln155 is a (R)-pantoate binding site. Residue 186–189 (LSSR) coordinates ATP.

Belongs to the pantothenate synthetase family. In terms of assembly, homodimer.

It localises to the cytoplasm. The enzyme catalyses (R)-pantoate + beta-alanine + ATP = (R)-pantothenate + AMP + diphosphate + H(+). It functions in the pathway cofactor biosynthesis; (R)-pantothenate biosynthesis; (R)-pantothenate from (R)-pantoate and beta-alanine: step 1/1. Its function is as follows. Catalyzes the condensation of pantoate with beta-alanine in an ATP-dependent reaction via a pantoyl-adenylate intermediate. This Escherichia coli O157:H7 protein is Pantothenate synthetase.